A 77-amino-acid chain; its full sequence is Conotoxin ArMKLT2-0251 (77 aa).

Positions 1–22 (MKLTCVLIVAVLILTACQLIAA) are cleaved as a signal peptide. Positions 23 to 46 (DDSRDLKRFSRRKMRDGMLNTKNM) are excised as a propeptide. At Gln-49 the chain carries Pyrrolidone carboxylic acid. 3 disulfides stabilise this stretch: Cys-50/Cys-65, Cys-57/Cys-68, and Cys-64/Cys-73.

Belongs to the conotoxin O1 superfamily. As to expression, expressed by the venom duct.

Its subcellular location is the secreted. The sequence is that of Conotoxin ArMKLT2-0251 from Conus arenatus (Sand-dusted cone).